A 715-amino-acid polypeptide reads, in one-letter code: Bromodomain-containing protein DDB_G0278469 (715 aa).

Disordered stretches follow at residues 18–46 (EDNN…NRNA) and 186–425 (QQQK…ETKQ). 5 stretches are compositionally biased toward low complexity: residues 20–45 (NNNN…PNRN), 186–204 (QQQK…PTAQ), 215–227 (LTAA…TTTT), 234–254 (TAPP…TTKK), and 261–281 (SKSN…TTIT). Basic and acidic residues predominate over residues 307 to 316 (KPKEQKKDIM). The stretch at 322-368 (SKKANTHEEKEEGESEEEEEEEEEEEEEEEEEEEEEQLEDKQKQTKT) forms a coiled coil. Residues 332 to 359 (EEGESEEEEEEEEEEEEEEEEEEEEEQL) show a composition bias toward acidic residues. Residues 366-389 (TKTPISQNKSASSNIKPLSKTSKS) show a composition bias toward polar residues. Over residues 405–414 (KKITSTTVTR) the composition is skewed to low complexity. Positions 437-470 (KQQTQEEIEQELKLESIRKRIEQFINKFEKEIND) form a coiled coil. Residues 474–599 (KDLDEGKRKI…IQFYKSLLET (126 aa)) form the Bromo domain. The interval 653-715 (LVDEDEDECL…SEEEDQEATN (63 aa)) is disordered. Over residues 662–672 (LNNQNNPTTYD) the composition is skewed to polar residues. Residues 684 to 715 (QESDEESDEESDEESDEERDQLSEEEDQEATN) show a composition bias toward acidic residues.

The protein is Bromodomain-containing protein DDB_G0278469 of Dictyostelium discoideum (Social amoeba).